Reading from the N-terminus, the 436-residue chain is 3-ketoacyl-CoA thiolase (436 aa).

C99 serves as the catalytic Acyl-thioester intermediate. Residues H392 and C422 each act as proton acceptor in the active site.

Belongs to the thiolase-like superfamily. Thiolase family. In terms of assembly, heterotetramer of two alpha chains (FadJ) and two beta chains (FadI).

It is found in the cytoplasm. It catalyses the reaction an acyl-CoA + acetyl-CoA = a 3-oxoacyl-CoA + CoA. Its pathway is lipid metabolism; fatty acid beta-oxidation. Catalyzes the final step of fatty acid oxidation in which acetyl-CoA is released and the CoA ester of a fatty acid two carbons shorter is formed. The chain is 3-ketoacyl-CoA thiolase from Escherichia coli O9:H4 (strain HS).